A 643-amino-acid chain; its full sequence is tRNA 5-methylaminomethyl-2-thiouridine biosynthesis bifunctional protein MnmC (643 aa).

The tRNA (mnm(5)s(2)U34)-methyltransferase stretch occupies residues 1–223; that stretch reads MPDRLVSATL…VDDRLVGDYA (223 aa). The tract at residues 247–643 is FAD-dependent cmnm(5)s(2)U34 oxidoreductase; that stretch reads IGAGLAGCAV…LRARRVGSAG (397 aa).

This sequence in the N-terminal section; belongs to the methyltransferase superfamily. tRNA (mnm(5)s(2)U34)-methyltransferase family. It in the C-terminal section; belongs to the DAO family. FAD serves as cofactor.

Its subcellular location is the cytoplasm. The catalysed reaction is 5-aminomethyl-2-thiouridine(34) in tRNA + S-adenosyl-L-methionine = 5-methylaminomethyl-2-thiouridine(34) in tRNA + S-adenosyl-L-homocysteine + H(+). In terms of biological role, catalyzes the last two steps in the biosynthesis of 5-methylaminomethyl-2-thiouridine (mnm(5)s(2)U) at the wobble position (U34) in tRNA. Catalyzes the FAD-dependent demodification of cmnm(5)s(2)U34 to nm(5)s(2)U34, followed by the transfer of a methyl group from S-adenosyl-L-methionine to nm(5)s(2)U34, to form mnm(5)s(2)U34. The chain is tRNA 5-methylaminomethyl-2-thiouridine biosynthesis bifunctional protein MnmC from Burkholderia orbicola (strain AU 1054).